The primary structure comprises 343 residues: Protein RecA (343 aa).

65-72 (GPESSGKT) provides a ligand contact to ATP.

Belongs to the RecA family.

It localises to the cytoplasm. Can catalyze the hydrolysis of ATP in the presence of single-stranded DNA, the ATP-dependent uptake of single-stranded DNA by duplex DNA, and the ATP-dependent hybridization of homologous single-stranded DNAs. It interacts with LexA causing its activation and leading to its autocatalytic cleavage. The chain is Protein RecA from Campylobacter jejuni subsp. doylei (strain ATCC BAA-1458 / RM4099 / 269.97).